A 500-amino-acid chain; its full sequence is NAD(P)H-quinone oxidoreductase subunit 2 A, chloroplastic (500 aa).

13 helical membrane passes run 14–34 (LLLFDGSLIFPECILIFGLIL), 47–67 (IPWFYFISSTSLVMSITALLF), 89–109 (IFQFLILLCSTLSIPLSVEYI), 114–134 (MAITEFLLFILTATLGGMFLC), 139–159 (FITIFVAPECFSLCSYLLSGY), 173–193 (YLLMGGASSSILVHAFSWLYG), 217–237 (PGISIALIFITVGIGFKLSPA), 285–305 (WHLLLEILAILSMILGNLIAI), 313–333 (MLAYSSIGQIGYVIIGIIVGD), 344–364 (YMLFYISMNLGTFACIVLFGL), 385–405 (ALSLALCLLSLGGLPPLAGFF), 408–428 (LHLFWCGWQAGLSFLVSIGLL), and 474–494 (MIVCVIASTIPGISMNPIIAI).

Belongs to the complex I subunit 2 family. In terms of assembly, NDH is composed of at least 16 different subunits, 5 of which are encoded in the nucleus.

It localises to the plastid. Its subcellular location is the chloroplast thylakoid membrane. It carries out the reaction a plastoquinone + NADH + (n+1) H(+)(in) = a plastoquinol + NAD(+) + n H(+)(out). The catalysed reaction is a plastoquinone + NADPH + (n+1) H(+)(in) = a plastoquinol + NADP(+) + n H(+)(out). NDH shuttles electrons from NAD(P)H:plastoquinone, via FMN and iron-sulfur (Fe-S) centers, to quinones in the photosynthetic chain and possibly in a chloroplast respiratory chain. The immediate electron acceptor for the enzyme in this species is believed to be plastoquinone. Couples the redox reaction to proton translocation, and thus conserves the redox energy in a proton gradient. In Pelargonium hortorum (Common geranium), this protein is NAD(P)H-quinone oxidoreductase subunit 2 A, chloroplastic.